Reading from the N-terminus, the 179-residue chain is Natural killer cells antigen CD94 (179 aa).

At 1–10 (MAVFKTTLWR) the chain is on the cytoplasmic side. The helical; Signal-anchor for type II membrane protein transmembrane segment at 11–31 (LISGTLGIICLSLMSTLGILL) threads the bilayer. Over 32-179 (KNSFTKLSIE…NRYICKQQLI (148 aa)) the chain is Extracellular. Intrachain disulfides connect C58–C70 and C61–C72. The C-type lectin domain maps to 68 to 175 (YRCNCYFISS…CEDKNRYICK (108 aa)). N-linked (GlcNAc...) asparagine glycosylation is found at N83 and N132. 2 disulfides stabilise this stretch: C89-C174 and C152-C166.

Can form disulfide-bonded heterodimer with NKG2 family members KLRC1 and KLRC2. KLRD1-KLRC1 heterodimer interacts with peptide-bound HLA-E-B2M heterotrimeric complex. KLRD1 plays a prominent role in directly interacting with HLA-E. KLRD1-KLRC1 interacts with much higher affinity with peptide-bound HLA-E-B2M than KLRD1-KLRC2. Interacts with the adapter protein TYROBP/DAP12; this interaction is required for cell surface expression and cell activation. Expressed in NK cell subsets (at protein level). Expressed in memory/effector CD8-positive alpha-beta T cell subsets (at protein level). Expressed in melanoma-specific cytotoxic T cell clones (at protein level). Expressed in terminally differentiated cytotoxic gamma-delta T cells (at protein level). KLRD1-KLRC1 and KLRD1-KLRC2 are differentially expressed in NK and T cell populations, with only minor subsets expressing both receptor complexes (at protein level).

It localises to the cell membrane. Its function is as follows. Immune receptor involved in self-nonself discrimination. In complex with KLRC1 or KLRC2 on cytotoxic and regulatory lymphocyte subsets, recognizes non-classical major histocompatibility (MHC) class Ib molecule HLA-E loaded with self-peptides derived from the signal sequence of classical MHC class Ia and non-classical MHC class Ib molecules. Enables cytotoxic cells to monitor the expression of MHC class I molecules in healthy cells and to tolerate self. Primarily functions as a ligand binding subunit as it lacks the capacity to signal. Functionally, KLRD1-KLRC1 acts as an immune inhibitory receptor. Key inhibitory receptor on natural killer (NK) cells that regulates their activation and effector functions. Dominantly counteracts T cell receptor signaling on a subset of memory/effector CD8-positive T cells as part of an antigen-driven response to avoid autoimmunity. On intraepithelial CD8-positive gamma-delta regulatory T cells triggers TGFB1 secretion, which in turn limits the cytotoxic programming of intraepithelial CD8-positive alpha-beta T cells, distinguishing harmless from pathogenic antigens. In HLA-E-rich tumor microenvironment, acts as an immune inhibitory checkpoint and may contribute to progressive loss of effector functions of NK cells and tumor-specific T cells, a state known as cell exhaustion. Upon HLA-E-peptide binding, transmits intracellular signals through KLRC1 immunoreceptor tyrosine-based inhibition motifs (ITIMs) by recruiting INPP5D/SHIP-1 and INPPL1/SHIP-2 tyrosine phosphatases to ITIMs, and ultimately opposing signals transmitted by activating receptors through dephosphorylation of proximal signaling molecules. In terms of biological role, KLRD1-KLRC2 acts as an immune activating receptor. On cytotoxic lymphocyte subsets recognizes HLA-E loaded with signal sequence-derived peptides from non-classical MHC class Ib HLA-G molecules, likely playing a role in the generation and effector functions of adaptive NK cells and in maternal-fetal tolerance during pregnancy. Regulates the effector functions of terminally differentiated cytotoxic lymphocyte subsets, and in particular may play a role in adaptive NK cell response to viral infection. Upon HLA-E-peptide binding, transmits intracellular signals via the adapter protein TYROBP/DAP12, triggering the phosphorylation of proximal signaling molecules and cell activation. (Microbial infection) Viruses like human cytomegalovirus have evolved an escape mechanism whereby virus-induced down-regulation of host MHC class I molecules is coupled to the binding of viral peptides to HLA-E, restoring HLA-E expression and inducing HLA-E-dependent NK cell immune tolerance to infected cells. Recognizes HLA-E in complex with human cytomegalovirus UL40-derived peptide (VMAPRTLIL) and inhibits NK cell cytotoxicity. Its function is as follows. (Microbial infection) May recognize HLA-E in complex with HIV-1 gag/Capsid protein p24-derived peptide (AISPRTLNA) on infected cells and may inhibit NK cell cytotoxicity, a mechanism that allows HIV-1 to escape immune recognition. Functionally, (Microbial infection) Upon SARS-CoV-2 infection, may contribute to functional exhaustion of cytotoxic NK cells and CD8-positive T cells. On NK cells, may recognize HLA-E in complex with SARS-CoV-2 S/Spike protein S1-derived peptide (LQPRTFLL) expressed on the surface of lung epithelial cells, inducing NK cell exhaustion and dampening antiviral immune surveillance. The sequence is that of Natural killer cells antigen CD94 (KLRD1) from Homo sapiens (Human).